A 283-amino-acid polypeptide reads, in one-letter code: Elongation factor Ts (283 aa).

Residues 79–82 (TDFV) are involved in Mg(2+) ion dislocation from EF-Tu.

This sequence belongs to the EF-Ts family.

It is found in the cytoplasm. In terms of biological role, associates with the EF-Tu.GDP complex and induces the exchange of GDP to GTP. It remains bound to the aminoacyl-tRNA.EF-Tu.GTP complex up to the GTP hydrolysis stage on the ribosome. The chain is Elongation factor Ts from Shewanella putrefaciens (strain CN-32 / ATCC BAA-453).